The chain runs to 353 residues: Phospho-N-acetylmuramoyl-pentapeptide-transferase (353 aa).

Transmembrane regions (helical) follow at residues 24 to 44 (LGFF…ILWA), 66 to 86 (TPTM…VLCA), 88 to 108 (LGNL…FVGF), 129 to 149 (FGML…KGLD), 160 to 180 (PLFE…FLST), 192 to 212 (GLAS…VYVA), 229 to 249 (VGEL…FLWY), 256 to 276 (VFMG…NAIV), 281 to 301 (ILLV…ILQV), and 330 to 350 (KVIV…LLSL).

The protein belongs to the glycosyltransferase 4 family. MraY subfamily. Mg(2+) is required as a cofactor.

The protein resides in the cell inner membrane. The catalysed reaction is UDP-N-acetyl-alpha-D-muramoyl-L-alanyl-gamma-D-glutamyl-meso-2,6-diaminopimeloyl-D-alanyl-D-alanine + di-trans,octa-cis-undecaprenyl phosphate = di-trans,octa-cis-undecaprenyl diphospho-N-acetyl-alpha-D-muramoyl-L-alanyl-D-glutamyl-meso-2,6-diaminopimeloyl-D-alanyl-D-alanine + UMP. It functions in the pathway cell wall biogenesis; peptidoglycan biosynthesis. Its function is as follows. Catalyzes the initial step of the lipid cycle reactions in the biosynthesis of the cell wall peptidoglycan: transfers peptidoglycan precursor phospho-MurNAc-pentapeptide from UDP-MurNAc-pentapeptide onto the lipid carrier undecaprenyl phosphate, yielding undecaprenyl-pyrophosphoryl-MurNAc-pentapeptide, known as lipid I. The sequence is that of Phospho-N-acetylmuramoyl-pentapeptide-transferase from Helicobacter pylori (strain Shi470).